The sequence spans 436 residues: Regulatory protein E2 (436 aa).

Residues 1 to 201 (MEKLSERFSA…DTVFTPVTSS (201 aa)) are transactivation domain. Over residues 195 to 209 (FTPVTSSTPPVGVAS) the composition is skewed to low complexity. Residues 195-328 (FTPVTSSTPP…DGGGVAPDEV (134 aa)) form a disordered region. Polar residues predominate over residues 210–230 (QNSAPEPASTSDSPQRSSQVT). Positions 284-293 (LSRESAESPR) are enriched in basic and acidic residues. The segment at 352–436 (DPPVILLRGA…EWSYGQFDDL (85 aa)) is DNA-binding domain.

Belongs to the papillomaviridae E2 protein family. In terms of assembly, binds DNA as homodimer. Interacts with protein E1; this interaction greatly increases E1 DNA-binding activity. Interacts with protein L1; this interaction enhances E2-dependent replication and transcription activation. Interacts with protein L2; this interaction inhibits E2 transcriptional activity but not DNA replication function E2. Interacts with protein E7; this interaction inhibits E7 oncogenic activity. Interacts with host TAF1; this interaction modulates E2-dependent transcriptional regulation. Interacts with host BRD4; this interaction mediates E2 transcriptional activation function. Additionally, the interaction with host BRD4 on mitotic chromosomes mediates tethering of the viral genome. Interacts with host TOPBP1; this interaction is required for optimal viral DNA replication. In terms of processing, phosphorylated.

It localises to the host nucleus. Plays a role in the initiation of viral DNA replication. A dimer of E2 interacts with a dimer of E1 in order to improve specificity of E1 DNA binding activity. Once the complex recognizes and binds DNA at specific sites, the E2 dimer is removed from DNA. E2 also regulates viral transcription through binding to the E2RE response element (5'-ACCNNNNNNGGT-3') present in multiple copies in the regulatory regions of the viral genome. Activates or represses transcription depending on E2RE's position with regards to proximal promoter elements including the TATA-box. Repression occurs by sterically hindering the assembly of the transcription initiation complex. In Human papillomavirus 22, this protein is Regulatory protein E2.